Consider the following 224-residue polypeptide: Ribonuclease 3 (224 aa).

Positions 4–127 (IEKLERSLTY…IIGAIHLEAG (124 aa)) constitute an RNase III domain. Residue glutamate 40 participates in Mg(2+) binding. The active site involves aspartate 44. 2 residues coordinate Mg(2+): aspartate 113 and glutamate 116. Glutamate 116 is an active-site residue. Residues 154–223 (DYKTKLQEIT…AKIALEKLGA (70 aa)) enclose the DRBM domain.

This sequence belongs to the ribonuclease III family. As to quaternary structure, homodimer. Mg(2+) is required as a cofactor.

The protein resides in the cytoplasm. It catalyses the reaction Endonucleolytic cleavage to 5'-phosphomonoester.. Its function is as follows. Digests double-stranded RNA. Involved in the processing of primary rRNA transcript to yield the immediate precursors to the large and small rRNAs (23S and 16S). Processes some mRNAs, and tRNAs when they are encoded in the rRNA operon. Processes pre-crRNA and tracrRNA of type II CRISPR loci if present in the organism. This chain is Ribonuclease 3, found in Campylobacter jejuni (strain RM1221).